The following is a 420-amino-acid chain: Multiple sugar-binding protein (420 aa).

Residues 1–22 form the signal peptide; the sequence is MKWYKKIGLLGIVGLTSVLLAA. Residue C23 is the site of N-palmitoyl cysteine attachment. Residue C23 is the site of S-diacylglycerol cysteine attachment.

Belongs to the bacterial solute-binding protein 1 family.

It localises to the cell membrane. In terms of biological role, involved in a binding protein-dependent transport system responsible for the uptake of melibiose, raffinose and isomaltotriose. The protein is Multiple sugar-binding protein of Streptococcus mutans serotype c (strain ATCC 700610 / UA159).